The following is a 385-amino-acid chain: Galactokinase (385 aa).

34–37 (EHTD) is a substrate binding site. 124–130 (SSGLSSS) provides a ligand contact to ATP. Mg(2+) is bound by residues serine 130 and glutamate 162. Catalysis depends on aspartate 174, which acts as the Proton acceptor. Tyrosine 223 contacts substrate.

This sequence belongs to the GHMP kinase family. GalK subfamily.

The protein resides in the cytoplasm. It carries out the reaction alpha-D-galactose + ATP = alpha-D-galactose 1-phosphate + ADP + H(+). Its pathway is carbohydrate metabolism; galactose metabolism. Its function is as follows. Catalyzes the transfer of the gamma-phosphate of ATP to D-galactose to form alpha-D-galactose-1-phosphate (Gal-1-P). The protein is Galactokinase of Actinobacillus succinogenes (strain ATCC 55618 / DSM 22257 / CCUG 43843 / 130Z).